The sequence spans 233 residues: Homeobox protein ceh-30 (233 aa).

Over residues 50–85 (NNSTYSHDLDPSPQSVRSDLSTSPRASSPDRNSPMS) the composition is skewed to polar residues. Disordered regions lie at residues 50–93 (NNST…KART) and 206–233 (FQAT…SNSD). The segment at residues 88–147 (SRKARTIFTDKQLQELENTFEKQKYLSVQDRMDLAHRMGLSDTQVKTWYQNRRTKWKRQA) is a DNA-binding region (homeobox). Polar residues predominate over residues 224–233 (PQLDVSSNSD).

It localises to the nucleus. Its function is as follows. Cell-type specific anti-apoptotic transcription factor required for the sexually dimorphic survival of the male-specific CEM (cephalic male) sensory neurons during sex determination. In hermaphrodites, the homologous cells undergo programmed cell death due to transcriptional repression of ceh-30 by tra-1, the terminal regulator in the sex determination pathway. The polypeptide is Homeobox protein ceh-30 (Caenorhabditis briggsae).